We begin with the raw amino-acid sequence, 615 residues long: 1-deoxy-D-xylulose-5-phosphate synthase (615 aa).

Thiamine diphosphate contacts are provided by residues His-77 and 118–120 (GHS). Mg(2+) is bound at residue Asp-149. Residues 150-151 (GA), Asn-178, Tyr-286, and Glu-367 each bind thiamine diphosphate. Residue Asn-178 participates in Mg(2+) binding.

The protein belongs to the transketolase family. DXPS subfamily. In terms of assembly, homodimer. It depends on Mg(2+) as a cofactor. Thiamine diphosphate serves as cofactor.

It catalyses the reaction D-glyceraldehyde 3-phosphate + pyruvate + H(+) = 1-deoxy-D-xylulose 5-phosphate + CO2. Its pathway is metabolic intermediate biosynthesis; 1-deoxy-D-xylulose 5-phosphate biosynthesis; 1-deoxy-D-xylulose 5-phosphate from D-glyceraldehyde 3-phosphate and pyruvate: step 1/1. Functionally, catalyzes the acyloin condensation reaction between C atoms 2 and 3 of pyruvate and glyceraldehyde 3-phosphate to yield 1-deoxy-D-xylulose-5-phosphate (DXP). In Glaesserella parasuis serovar 5 (strain SH0165) (Haemophilus parasuis), this protein is 1-deoxy-D-xylulose-5-phosphate synthase.